We begin with the raw amino-acid sequence, 158 residues long: Cytochrome c-type biogenesis protein CcmE (158 aa).

At 1–7 (MKPRHRR) the chain is on the cytoplasmic side. Residues 8–28 (LTLIALVLGGLGLSAGLALTA) form a helical; Signal-anchor for type II membrane protein membrane-spanning segment. Residues 29 to 158 (FQDNLVFFFT…DGHPETTTAY (130 aa)) are Periplasmic-facing. Positions 123 and 127 each coordinate heme. The tract at residues 138–158 (RIGQGNGTPGPDGHPETTTAY) is disordered.

This sequence belongs to the CcmE/CycJ family.

It is found in the cell inner membrane. In terms of biological role, heme chaperone required for the biogenesis of c-type cytochromes. Transiently binds heme delivered by CcmC and transfers the heme to apo-cytochromes in a process facilitated by CcmF and CcmH. This chain is Cytochrome c-type biogenesis protein CcmE, found in Alkalilimnicola ehrlichii (strain ATCC BAA-1101 / DSM 17681 / MLHE-1).